The following is an 829-amino-acid chain: Periplasmic nitrate reductase (829 aa).

A signal peptide (tat-type signal) is located at residues 1–30; the sequence is MKLSRRDFMKANAVAAAAAVAGVSAPTLAA. The region spanning 41-97 is the 4Fe-4S Mo/W bis-MGD-type domain; the sequence is IKWDKAPCRFCGTGCSVLVGSQDGRVVATQGDPDAPVNRGLNCIKGYFLSKIMYGED. The [4Fe-4S] cluster site is built by cysteine 48, cysteine 51, cysteine 55, and cysteine 83. Residues lysine 85, glutamine 152, asparagine 177, cysteine 181, 214–221, 245–249, 264–266, methionine 374, glutamine 378, asparagine 484, 510–511, lysine 533, aspartate 560, and 719–728 each bind Mo-bis(molybdopterin guanine dinucleotide); these read WGSNMAEM, STFEH, QTD, SD, and TGRVLEHWHT. Position 795 (phenylalanine 795) interacts with substrate. Residues asparagine 803 and lysine 820 each contribute to the Mo-bis(molybdopterin guanine dinucleotide) site.

The protein belongs to the prokaryotic molybdopterin-containing oxidoreductase family. NasA/NapA/NarB subfamily. Component of the periplasmic nitrate reductase NapAB complex composed of NapA and NapB. [4Fe-4S] cluster is required as a cofactor. Mo-bis(molybdopterin guanine dinucleotide) serves as cofactor. In terms of processing, predicted to be exported by the Tat system. The position of the signal peptide cleavage has not been experimentally proven.

It localises to the periplasm. The catalysed reaction is 2 Fe(II)-[cytochrome] + nitrate + 2 H(+) = 2 Fe(III)-[cytochrome] + nitrite + H2O. In terms of biological role, catalytic subunit of the periplasmic nitrate reductase complex NapAB. Receives electrons from NapB and catalyzes the reduction of nitrate to nitrite. This is Periplasmic nitrate reductase from Aeromonas salmonicida (strain A449).